The primary structure comprises 528 residues: G protein-coupled receptor 161 (528 aa).

The Extracellular segment spans residues 1–30; sequence MSLNSSLGHRKELSNLTEGASDQGGSGVTE. N-linked (GlcNAc...) asparagine glycosylation is found at Asn4 and Asn15. Residues 31-51 traverse the membrane as a helical segment; the sequence is FVAIVIITVFVCLGNLVIVIT. The Cytoplasmic segment spans residues 52–64; that stretch reads LYRKSYLLTLSNK. A helical membrane pass occupies residues 65-85; the sequence is FVFSLTLSNFLLSVLVLPFVV. At 86–101 the chain is on the extracellular side; sequence TSSIRREWIFGVVWCN. Cys100 and Cys178 are oxidised to a cystine. The N-linked (GlcNAc...) asparagine glycan is linked to Asn101. Residues 102–122 traverse the membrane as a helical segment; it reads FSALLYLLISSASMLTLGIIA. Residues 123–143 lie on the Cytoplasmic side of the membrane; it reads VDRYYAVLYPMAYPMKITGNR. The helical transmembrane segment at 144–164 threads the bilayer; it reads AVMVLAYIWLHSLIGCLPPLF. Topologically, residues 165 to 190 are extracellular; it reads GWSSVEFDEFKWMCVAAWHREPGYTA. The chain crosses the membrane as a helical span at residues 191-211; that stretch reads FWQIWCALLPFLVMLVCYGFI. Residues 212–269 are Cytoplasmic-facing; it reads FRVARVKARKVHCGAVVTVEVGVQRTGRKNSSTSTSSSGSRKSAFQGVVYSANQCKAL. A helical transmembrane segment spans residues 270–290; sequence VTILVVIGAFMVTWGPYMVVI. Residues 291–306 lie on the Extracellular side of the membrane; sequence TSEALWGKNCVSPTLE. The chain crosses the membrane as a helical span at residues 307 to 327; that stretch reads TWATWLSFTSAICHPLIYGLW. Topologically, residues 328-528 are cytoplasmic; it reads NKTVRKELLG…EGDVLATEQR (201 aa).

This sequence belongs to the G-protein coupled receptor 1 family.

It localises to the cell projection. The protein resides in the cilium membrane. Its subcellular location is the cell membrane. Its function is as follows. Key negative regulator of Shh signaling, which promotes the processing of GLI3 into GLI3R during neural tube development. Recruited by TULP3 and the IFT-A complex to primary cilia and acts as a regulator of the PKA-dependent basal repression machinery in Shh signaling by increasing cAMP levels, leading to promote the PKA-dependent processing of GLI3 into GLI3R and repress the Shh signaling. In presence of SHH, it is removed from primary cilia and is internalized into recycling endosomes, preventing its activity and allowing activation of the Shh signaling. Its ligand is unknown. In Bos taurus (Bovine), this protein is G protein-coupled receptor 161 (GPR161).